Reading from the N-terminus, the 389-residue chain is 8-amino-7-oxononanoate synthase (389 aa).

Arg31 lines the substrate pocket. Residue 109–110 (GY) participates in pyridoxal 5'-phosphate binding. His134 lines the substrate pocket. Pyridoxal 5'-phosphate-binding positions include Ser180, 205 to 208 (DEAH), and 236 to 239 (TLSK). Lys239 is modified (N6-(pyridoxal phosphate)lysine). Thr349 serves as a coordination point for substrate.

Belongs to the class-II pyridoxal-phosphate-dependent aminotransferase family. BioF subfamily. As to quaternary structure, homodimer. Pyridoxal 5'-phosphate is required as a cofactor.

It carries out the reaction 6-carboxyhexanoyl-[ACP] + L-alanine + H(+) = (8S)-8-amino-7-oxononanoate + holo-[ACP] + CO2. Its pathway is cofactor biosynthesis; biotin biosynthesis. Its function is as follows. Catalyzes the decarboxylative condensation of pimeloyl-[acyl-carrier protein] and L-alanine to produce 8-amino-7-oxononanoate (AON), [acyl-carrier protein], and carbon dioxide. The protein is 8-amino-7-oxononanoate synthase of Mycobacterium marinum (strain ATCC BAA-535 / M).